The primary structure comprises 454 residues: tRNA modification GTPase MnmE (454 aa).

(6S)-5-formyl-5,6,7,8-tetrahydrofolate-binding residues include Arg23, Glu80, and Lys120. The 162-residue stretch at 216 to 377 (GMKVVIAGRP…LRNHLKQSMG (162 aa)) folds into the TrmE-type G domain. Asn226 is a binding site for K(+). Residues 226 to 231 (NAGKSS), 245 to 251 (TDIAGTT), 270 to 273 (DTAG), 335 to 338 (NKAD), and 358 to 360 (SAR) contribute to the GTP site. Ser230 lines the Mg(2+) pocket. Thr245, Ile247, and Thr250 together coordinate K(+). Residue Thr251 participates in Mg(2+) binding. Lys454 is a (6S)-5-formyl-5,6,7,8-tetrahydrofolate binding site.

It belongs to the TRAFAC class TrmE-Era-EngA-EngB-Septin-like GTPase superfamily. TrmE GTPase family. In terms of assembly, homodimer. Heterotetramer of two MnmE and two MnmG subunits. It depends on K(+) as a cofactor.

It is found in the cytoplasm. Exhibits a very high intrinsic GTPase hydrolysis rate. Involved in the addition of a carboxymethylaminomethyl (cmnm) group at the wobble position (U34) of certain tRNAs, forming tRNA-cmnm(5)s(2)U34. The protein is tRNA modification GTPase MnmE of Shigella dysenteriae serotype 1 (strain Sd197).